We begin with the raw amino-acid sequence, 325 residues long: Ribonucleoside-diphosphate reductase small chain (325 aa).

Residues aspartate 74, glutamate 105, and histidine 108 each coordinate Fe cation. The active site involves tyrosine 112. Glutamate 168, glutamate 202, and histidine 205 together coordinate Fe cation.

The protein belongs to the ribonucleoside diphosphate reductase small chain family. As to quaternary structure, heterodimer of a large and a small chain. Fe cation serves as cofactor.

It carries out the reaction a 2'-deoxyribonucleoside 5'-diphosphate + [thioredoxin]-disulfide + H2O = a ribonucleoside 5'-diphosphate + [thioredoxin]-dithiol. Ribonucleoside-diphosphate reductase holoenzyme provides the precursors necessary for viral DNA synthesis. Allows virus growth in non-dividing cells. Catalyzes the biosynthesis of deoxyribonucleotides from the corresponding ribonucleotides. The sequence is that of Ribonucleoside-diphosphate reductase small chain from Yaba-like disease virus (YLDV).